Here is a 92-residue protein sequence, read N- to C-terminus: uncharacterized protein (92 aa).

It belongs to the IUNH family.

This is an uncharacterized protein from Corynebacterium ammoniagenes (Brevibacterium ammoniagenes).